A 524-amino-acid polypeptide reads, in one-letter code: tRNA-2-methylthio-N(6)-dimethylallyladenosine synthase (524 aa).

Residues methionine 1–alanine 12 are compositionally biased toward basic and acidic residues. Residues methionine 1–glycine 23 are disordered. The 117-residue stretch at arginine 27 to histidine 143 folds into the MTTase N-terminal domain. Positions 36, 72, 106, 180, 184, and 187 each coordinate [4Fe-4S] cluster. A Radical SAM core domain is found at arginine 166 to glutamate 402. The 72-residue stretch at glutamine 405–valine 476 folds into the TRAM domain.

The protein belongs to the methylthiotransferase family. MiaB subfamily. Monomer. It depends on [4Fe-4S] cluster as a cofactor.

It is found in the cytoplasm. The catalysed reaction is N(6)-dimethylallyladenosine(37) in tRNA + (sulfur carrier)-SH + AH2 + 2 S-adenosyl-L-methionine = 2-methylsulfanyl-N(6)-dimethylallyladenosine(37) in tRNA + (sulfur carrier)-H + 5'-deoxyadenosine + L-methionine + A + S-adenosyl-L-homocysteine + 2 H(+). In terms of biological role, catalyzes the methylthiolation of N6-(dimethylallyl)adenosine (i(6)A), leading to the formation of 2-methylthio-N6-(dimethylallyl)adenosine (ms(2)i(6)A) at position 37 in tRNAs that read codons beginning with uridine. The chain is tRNA-2-methylthio-N(6)-dimethylallyladenosine synthase from Corynebacterium efficiens (strain DSM 44549 / YS-314 / AJ 12310 / JCM 11189 / NBRC 100395).